A 221-amino-acid polypeptide reads, in one-letter code: Epididymal secretory glutathione peroxidase (221 aa).

The signal sequence occupies residues 1–21 (MTAWLGASYVLPILLVSFVQT). C73 is a catalytic residue.

It belongs to the glutathione peroxidase family. As to expression, epididymis.

The protein localises to the secreted. The catalysed reaction is 2 glutathione + H2O2 = glutathione disulfide + 2 H2O. Protects cells and enzymes from oxidative damage, by catalyzing the reduction of hydrogen peroxide, lipid peroxides and organic hydroperoxide, by glutathione. May constitute a glutathione peroxidase-like protective system against peroxide damage in sperm membrane lipids. This is Epididymal secretory glutathione peroxidase (GPX5) from Canis lupus familiaris (Dog).